Here is a 1270-residue protein sequence, read N- to C-terminus: DNA-directed RNA polymerase subunit beta (1270 aa).

The protein belongs to the RNA polymerase beta chain family. In terms of assembly, the RNAP catalytic core consists of 2 alpha, 1 beta, 1 beta' and 1 omega subunit. When a sigma factor is associated with the core the holoenzyme is formed, which can initiate transcription.

It catalyses the reaction RNA(n) + a ribonucleoside 5'-triphosphate = RNA(n+1) + diphosphate. In terms of biological role, DNA-dependent RNA polymerase catalyzes the transcription of DNA into RNA using the four ribonucleoside triphosphates as substrates. The sequence is that of DNA-directed RNA polymerase subunit beta from Bacteroides thetaiotaomicron (strain ATCC 29148 / DSM 2079 / JCM 5827 / CCUG 10774 / NCTC 10582 / VPI-5482 / E50).